The following is a 498-amino-acid chain: N-acyl-D-aspartate deacylase (498 aa).

Residues 478 to 498 are disordered; that stretch reads AERPGQVLAPGDAIPWSQQSE.

The protein belongs to the metallo-dependent hydrolases superfamily. N-acyl-D-amino-acid deacylase family. Zn(2+) serves as cofactor.

It is found in the cytoplasm. It carries out the reaction an N-acyl-D-aspartate + H2O = D-aspartate + a carboxylate. This chain is N-acyl-D-aspartate deacylase, found in Alcaligenes xylosoxydans xylosoxydans (Achromobacter xylosoxidans).